The sequence spans 277 residues: Large ribosomal subunit protein uL2 (277 aa).

Positions 225–277 (MNPIDHPHGGGEGKTAAGRHPVSPWGTPSKGFRTRVNKRTDGMIVRRRYSNKG) are disordered.

Belongs to the universal ribosomal protein uL2 family. Part of the 50S ribosomal subunit. Forms a bridge to the 30S subunit in the 70S ribosome.

In terms of biological role, one of the primary rRNA binding proteins. Required for association of the 30S and 50S subunits to form the 70S ribosome, for tRNA binding and peptide bond formation. It has been suggested to have peptidyltransferase activity; this is somewhat controversial. Makes several contacts with the 16S rRNA in the 70S ribosome. In Nitrosospira multiformis (strain ATCC 25196 / NCIMB 11849 / C 71), this protein is Large ribosomal subunit protein uL2.